A 295-amino-acid polypeptide reads, in one-letter code: Dual specificity protein phosphatase 15 (295 aa).

The region spanning 1 to 141 (MTEGVLPGLY…LEEFGWASSQ (141 aa)) is the Tyrosine-protein phosphatase domain. Threonine 2 is lipidated: N-myristoyl glycine. Catalysis depends on cysteine 85, which acts as the Phosphocysteine intermediate. Over residues 251–270 (SSSCTLSASTERPDGSSTPG) the composition is skewed to polar residues. The interval 251–272 (SSSCTLSASTERPDGSSTPGNP) is disordered.

It belongs to the protein-tyrosine phosphatase family. Non-receptor class dual specificity subfamily. As to expression, highly expressed in testis. Expressed in brain; up-regulated in patients with multiple sclerosis gray matter lesions.

Its subcellular location is the cytoplasm. The protein localises to the cell membrane. It catalyses the reaction O-phospho-L-tyrosyl-[protein] + H2O = L-tyrosyl-[protein] + phosphate. The enzyme catalyses O-phospho-L-seryl-[protein] + H2O = L-seryl-[protein] + phosphate. It carries out the reaction O-phospho-L-threonyl-[protein] + H2O = L-threonyl-[protein] + phosphate. May dephosphorylate MAPK13, ATF2, ERBB3, PDGFRB and SNX6. Functionally, may play a role in the regulation of oligodendrocyte differentiation. May play a role in the regulation of myelin formation. Involved in the regulation of Erk1/2 phosphorylation in Schwann cells; the signaling may be linked to the regulation of myelination. The sequence is that of Dual specificity protein phosphatase 15 from Homo sapiens (Human).